The chain runs to 573 residues: MSEFEDHEGNGTVADAIYDEENGGRDGEIEDQLDSKPKRESRDHERETSRSKDREREKGRDKDRERDSEVSRRSRDRDGEKSKERSRDKDRDHRERHHRSSRHRDHSRERGERRERGGRDDDDYRRSRDRDHDRRRDDRGGRRSRRSRSRSKDRSERRTRSRSPSKSKQRVSGFDMAPPASAMLAAGAAVTGQVPPAPPTLPGAGMFPNMFPLPTGQSFGGLSMMPIQAMTQQATRHARRVYVGGLSPTANEQSVATFFSQVMAAVGGNTAGPGDAVVNVYINHEKKFAFVEMRSVEEASNAMSLDGIIFEGAPVKVRRPSDYNPSLAATLGPSQPSPHLNLAAVGLTPGASGGLEGPDRIFVGGLPYYFTESQVRELLESFGGLKGFDLVKDRETGNSKGYAFCVYQDLSVTDIACAALNGIKMGDKTLTVRRANQGTMLQKPEQENVLLHAQQQIAFQRVMLQPGAVATTVVCLTQVVTEDELRDDEEYGDIMEDMRQEGGKFGALTNVVIPRPSPNGEPVAGLGKVFLKYADTDGSTRARFGMNGRKFGGNEVVAVYYPEDKFEQGDYGA.

The interval 1–175 (MSEFEDHEGN…KSKQRVSGFD (175 aa)) is disordered. The span at 22–93 (NGGRDGEIED…ERSRDKDRDH (72 aa)) shows a compositional bias: basic and acidic residues. Over residues 94 to 105 (RERHHRSSRHRD) the composition is skewed to basic residues. Residues 106 to 141 (HSRERGERRERGGRDDDDYRRSRDRDHDRRRDDRGG) show a composition bias toward basic and acidic residues. Residues 159–169 (TRSRSPSKSKQ) show a composition bias toward basic residues. 3 RRM domains span residues 239-322 (RRVY…RPSD), 359-437 (DRIF…RANQ), and 478-564 (QVVT…YPED).

The protein belongs to the splicing factor SR family. In terms of assembly, component of the spliceosome. Interacts with SUA. Interacts with SF1 in the nucleus.

The protein localises to the nucleus. Functionally, necessary for the splicing of pre-mRNA. The protein is Splicing factor U2af large subunit A of Arabidopsis thaliana (Mouse-ear cress).